The primary structure comprises 108 residues: MTRKIFTNTRERWRQQNVNSAFAKLRKLIPTHPPDKKLSKNETLRLAMRYINFLVKVLGEQSLQQTGVAAQGNILGLFPQGPHLPGLEDRTLLENYQVPSPGPSHHIP.

One can recognise a bHLH domain in the interval 2–54 (TRKIFTNTRERWRQQNVNSAFAKLRKLIPTHPPDKKLSKNETLRLAMRYINFL). Residues 89–108 (DRTLLENYQVPSPGPSHHIP) are disordered.

The chain is T-cell acute lymphocytic leukemia protein 2 (TAL2) from Homo sapiens (Human).